A 394-amino-acid polypeptide reads, in one-letter code: Carbamoyl phosphate synthase small chain (394 aa).

Residues 1-188 (MIRKERAILA…ALPYAFPTLR (188 aa)) form a CPSase region. Residues Ser49, Gly240, and Gly242 each coordinate L-glutamine. One can recognise a Glutamine amidotransferase type-1 domain in the interval 192–379 (RVVLMDFGIK…IEEIDAFDGG (188 aa)). Catalysis depends on Cys267, which acts as the Nucleophile. L-glutamine contacts are provided by Leu268, Gln271, Asn309, Gly311, and Tyr312. Residues His352 and Glu354 contribute to the active site.

This sequence belongs to the CarA family. Composed of two chains; the small (or glutamine) chain promotes the hydrolysis of glutamine to ammonia, which is used by the large (or ammonia) chain to synthesize carbamoyl phosphate. Tetramer of heterodimers (alpha,beta)4.

It catalyses the reaction hydrogencarbonate + L-glutamine + 2 ATP + H2O = carbamoyl phosphate + L-glutamate + 2 ADP + phosphate + 2 H(+). The catalysed reaction is L-glutamine + H2O = L-glutamate + NH4(+). It participates in amino-acid biosynthesis; L-arginine biosynthesis; carbamoyl phosphate from bicarbonate: step 1/1. The protein operates within pyrimidine metabolism; UMP biosynthesis via de novo pathway; (S)-dihydroorotate from bicarbonate: step 1/3. Functionally, small subunit of the glutamine-dependent carbamoyl phosphate synthetase (CPSase). CPSase catalyzes the formation of carbamoyl phosphate from the ammonia moiety of glutamine, carbonate, and phosphate donated by ATP, constituting the first step of 2 biosynthetic pathways, one leading to arginine and/or urea and the other to pyrimidine nucleotides. The small subunit (glutamine amidotransferase) binds and cleaves glutamine to supply the large subunit with the substrate ammonia. This Deinococcus radiodurans (strain ATCC 13939 / DSM 20539 / JCM 16871 / CCUG 27074 / LMG 4051 / NBRC 15346 / NCIMB 9279 / VKM B-1422 / R1) protein is Carbamoyl phosphate synthase small chain.